The sequence spans 248 residues: Triosephosphate isomerase (248 aa).

Asn9 to Lys11 is a substrate binding site. His94 (electrophile) is an active-site residue. The Proton acceptor role is filled by Glu166. Substrate-binding positions include Gly172, Ser212, and Gly233–Gly234.

It belongs to the triosephosphate isomerase family. Homodimer.

The protein localises to the cytoplasm. It catalyses the reaction D-glyceraldehyde 3-phosphate = dihydroxyacetone phosphate. It functions in the pathway carbohydrate biosynthesis; gluconeogenesis. The protein operates within carbohydrate degradation; glycolysis; D-glyceraldehyde 3-phosphate from glycerone phosphate: step 1/1. Functionally, involved in the gluconeogenesis. Catalyzes stereospecifically the conversion of dihydroxyacetone phosphate (DHAP) to D-glyceraldehyde-3-phosphate (G3P). The chain is Triosephosphate isomerase from Caldanaerobacter subterraneus subsp. tengcongensis (strain DSM 15242 / JCM 11007 / NBRC 100824 / MB4) (Thermoanaerobacter tengcongensis).